Consider the following 55-residue polypeptide: UPF0391 membrane protein RALTA_A0099 (55 aa).

Transmembrane regions (helical) follow at residues 5-25 (ALVF…GIAA) and 30-50 (IAKI…VMGL).

This sequence belongs to the UPF0391 family.

The protein localises to the cell membrane. The protein is UPF0391 membrane protein RALTA_A0099 of Cupriavidus taiwanensis (strain DSM 17343 / BCRC 17206 / CCUG 44338 / CIP 107171 / LMG 19424 / R1) (Ralstonia taiwanensis (strain LMG 19424)).